The primary structure comprises 87 residues: Translation initiation factor IF-1 1 (87 aa).

Positions 1–72 constitute an S1-like domain; sequence MAKEELLELD…TKGRINFRHK (72 aa). A disordered region spans residues 68–87; sequence NFRHKDANSPRPPRTGQPRR. The span at 77–87 shows a compositional bias: pro residues; the sequence is PRPPRTGQPRR.

Belongs to the IF-1 family. As to quaternary structure, component of the 30S ribosomal translation pre-initiation complex which assembles on the 30S ribosome in the order IF-2 and IF-3, IF-1 and N-formylmethionyl-tRNA(fMet); mRNA recruitment can occur at any time during PIC assembly.

The protein localises to the cytoplasm. One of the essential components for the initiation of protein synthesis. Stabilizes the binding of IF-2 and IF-3 on the 30S subunit to which N-formylmethionyl-tRNA(fMet) subsequently binds. Helps modulate mRNA selection, yielding the 30S pre-initiation complex (PIC). Upon addition of the 50S ribosomal subunit IF-1, IF-2 and IF-3 are released leaving the mature 70S translation initiation complex. This chain is Translation initiation factor IF-1 1, found in Burkholderia lata (strain ATCC 17760 / DSM 23089 / LMG 22485 / NCIMB 9086 / R18194 / 383).